Reading from the N-terminus, the 509-residue chain is Zinc finger protein CKR1 (509 aa).

The region spanning 1 to 61 (MEPYVLLDPR…GSEEPQTHPP (61 aa)) is the KRAB domain. Basic and acidic residues-rich tracts occupy residues 41-50 (EDAVGLKEDA) and 98-112 (PKRDGVKPSRVRDRP). The disordered stretch occupies residues 41-114 (EDAVGLKEDA…PSRVRDRPFG (74 aa)). C2H2-type zinc fingers lie at residues 113–135 (FGCPDCGKSFPWASHLERHRRVH), 141–163 (YSCPECGESYSQSSHLVQHRRTH), 169–191 (HKCQHCGKPFAGAAQLLAHSRGH), 197–219 (HRCGDCGKGFVWASHLERHRRVH), 225–247 (YECPECGEAFSQGSHLTKHRRSH), 279–303 (QRCAECGKAFRAAPPLRRHRRERSH), 303–325 (HRCGDCGKGFAWASHLQRHRRVH), 331–353 (FPCGLCGERFSQKAHLLQHGKTH), 359–383 (YKCGDCGKRFENAPPFLAHRRGHAA), 387–409 (FTCGDCGKGFAWASHLQRHRRVH), and 415–437 (YECPECGEAFSQGSHLTKHRRSH). Residues 428–479 (SHLTKHRRSHGPKAPLLPVQGRGEAGEPLRASPLSSGAEQRDGRRAQRGGVE) are disordered.

Belongs to the krueppel C2H2-type zinc-finger protein family.

The protein localises to the nucleus. This is Zinc finger protein CKR1 from Gallus gallus (Chicken).